The chain runs to 131 residues: NADPH-dependent 7-cyano-7-deazaguanine reductase (131 aa).

C47 serves as the catalytic Thioimide intermediate. The Proton donor role is filled by D54. Residues 69–71 (MEL) and 88–89 (HE) each bind substrate.

The protein belongs to the GTP cyclohydrolase I family. QueF type 1 subfamily.

The protein resides in the cytoplasm. It catalyses the reaction 7-aminomethyl-7-carbaguanine + 2 NADP(+) = 7-cyano-7-deazaguanine + 2 NADPH + 3 H(+). It participates in tRNA modification; tRNA-queuosine biosynthesis. In terms of biological role, catalyzes the NADPH-dependent reduction of 7-cyano-7-deazaguanine (preQ0) to 7-aminomethyl-7-deazaguanine (preQ1). The polypeptide is NADPH-dependent 7-cyano-7-deazaguanine reductase (Microcystis aeruginosa (strain NIES-843 / IAM M-2473)).